A 360-amino-acid polypeptide reads, in one-letter code: S-adenosylmethionine:tRNA ribosyltransferase-isomerase (360 aa).

Belongs to the QueA family. Monomer.

It is found in the cytoplasm. It catalyses the reaction 7-aminomethyl-7-carbaguanosine(34) in tRNA + S-adenosyl-L-methionine = epoxyqueuosine(34) in tRNA + adenine + L-methionine + 2 H(+). It functions in the pathway tRNA modification; tRNA-queuosine biosynthesis. Functionally, transfers and isomerizes the ribose moiety from AdoMet to the 7-aminomethyl group of 7-deazaguanine (preQ1-tRNA) to give epoxyqueuosine (oQ-tRNA). The sequence is that of S-adenosylmethionine:tRNA ribosyltransferase-isomerase from Burkholderia pseudomallei (strain 1106a).